The primary structure comprises 351 residues: Glycerol-3-phosphate dehydrogenase [NAD(P)+] (351 aa).

4 residues coordinate NADPH: serine 18, tryptophan 19, arginine 38, and lysine 122. The sn-glycerol 3-phosphate site is built by lysine 122, glycine 153, and serine 155. Alanine 157 is an NADPH binding site. 5 residues coordinate sn-glycerol 3-phosphate: lysine 208, aspartate 261, serine 271, arginine 272, and asparagine 273. Catalysis depends on lysine 208, which acts as the Proton acceptor. NADPH is bound at residue arginine 272. An NADPH-binding site is contributed by glutamate 297.

It belongs to the NAD-dependent glycerol-3-phosphate dehydrogenase family.

It localises to the cytoplasm. The catalysed reaction is sn-glycerol 3-phosphate + NAD(+) = dihydroxyacetone phosphate + NADH + H(+). The enzyme catalyses sn-glycerol 3-phosphate + NADP(+) = dihydroxyacetone phosphate + NADPH + H(+). It participates in membrane lipid metabolism; glycerophospholipid metabolism. Its function is as follows. Catalyzes the reduction of the glycolytic intermediate dihydroxyacetone phosphate (DHAP) to sn-glycerol 3-phosphate (G3P), the key precursor for phospholipid synthesis. The sequence is that of Glycerol-3-phosphate dehydrogenase [NAD(P)+] from Bordetella pertussis (strain Tohama I / ATCC BAA-589 / NCTC 13251).